We begin with the raw amino-acid sequence, 159 residues long: Succinate dehydrogenase assembly factor 2, mitochondrial (159 aa).

Residues 1–14 (MASFCLSRCCALRG) constitute a mitochondrion transit peptide.

Belongs to the SDHAF2 family. As to quaternary structure, interacts with the flavoprotein subunit within the SDH catalytic dimer.

It is found in the mitochondrion matrix. In terms of biological role, plays an essential role in the assembly of succinate dehydrogenase (SDH), an enzyme complex (also referred to as respiratory complex II) that is a component of both the tricarboxylic acid (TCA) cycle and the mitochondrial electron transport chain, and which couples the oxidation of succinate to fumarate with the reduction of ubiquinone (coenzyme Q) to ubiquinol. Required for flavinylation (covalent attachment of FAD) of the flavoprotein subunit of the SDH catalytic dimer. In Culex quinquefasciatus (Southern house mosquito), this protein is Succinate dehydrogenase assembly factor 2, mitochondrial.